Consider the following 236-residue polypeptide: uncharacterized protein (236 aa).

The tract at residues methionine 1–glutamine 73 is disordered.

This is an uncharacterized protein from Homo sapiens (Human).